The following is a 307-amino-acid chain: Myeloid-associated differentiation marker-like protein 2 (307 aa).

2 consecutive MARVEL domains span residues 17-154 and 159-303; these read AVTS…ARPG and YMAT…RIRF. 7 helical membrane passes run 53 to 73, 90 to 110, 129 to 149, 163 to 183, 198 to 218, 229 to 249, and 278 to 298; these read FCMAAWGFCFAVSALVVACEF, AFAMLATLLCATAAVLYPLYF, LAASVFAGLLFLAYAVEVALT, VSGLLKIVQAFVACIIFGALV, VAVYSLCFLATVAVVALSVMG, RLVVVYTFLAVLLYLSAAVIW, and LVVAIFTYVNLLLYVVDLAYS.

It belongs to the MAL family.

Its subcellular location is the membrane. The chain is Myeloid-associated differentiation marker-like protein 2 (MYADML2) from Homo sapiens (Human).